Reading from the N-terminus, the 227-residue chain is Cytochrome c oxidase subunit 2 (227 aa).

Topologically, residues 1 to 14 are mitochondrial intermembrane; it reads MAYPFELGFQDATS. The chain crosses the membrane as a helical span at residues 15 to 45; sequence PIMEELLHFHDHTLMIVFLISSLVLYIISLM. At 46–59 the chain is on the mitochondrial matrix side; sequence LTTKLTHTSTMDAQ. The chain crosses the membrane as a helical span at residues 60 to 87; sequence EVETIWTILPAIILILIALPSLRVLYMM. Over 88–227 the chain is Mitochondrial intermembrane; it reads DEINDPSLTV…HFENWSSSML (140 aa). Cu cation-binding residues include H161, C196, E198, C200, H204, and M207. E198 contributes to the Mg(2+) binding site.

Belongs to the cytochrome c oxidase subunit 2 family. As to quaternary structure, component of the cytochrome c oxidase (complex IV, CIV), a multisubunit enzyme composed of 14 subunits. The complex is composed of a catalytic core of 3 subunits MT-CO1, MT-CO2 and MT-CO3, encoded in the mitochondrial DNA, and 11 supernumerary subunits COX4I, COX5A, COX5B, COX6A, COX6B, COX6C, COX7A, COX7B, COX7C, COX8 and NDUFA4, which are encoded in the nuclear genome. The complex exists as a monomer or a dimer and forms supercomplexes (SCs) in the inner mitochondrial membrane with NADH-ubiquinone oxidoreductase (complex I, CI) and ubiquinol-cytochrome c oxidoreductase (cytochrome b-c1 complex, complex III, CIII), resulting in different assemblies (supercomplex SCI(1)III(2)IV(1) and megacomplex MCI(2)III(2)IV(2)). Found in a complex with TMEM177, COA6, COX18, COX20, SCO1 and SCO2. Interacts with TMEM177 in a COX20-dependent manner. Interacts with COX20. Interacts with COX16. Cu cation is required as a cofactor.

It is found in the mitochondrion inner membrane. The enzyme catalyses 4 Fe(II)-[cytochrome c] + O2 + 8 H(+)(in) = 4 Fe(III)-[cytochrome c] + 2 H2O + 4 H(+)(out). Component of the cytochrome c oxidase, the last enzyme in the mitochondrial electron transport chain which drives oxidative phosphorylation. The respiratory chain contains 3 multisubunit complexes succinate dehydrogenase (complex II, CII), ubiquinol-cytochrome c oxidoreductase (cytochrome b-c1 complex, complex III, CIII) and cytochrome c oxidase (complex IV, CIV), that cooperate to transfer electrons derived from NADH and succinate to molecular oxygen, creating an electrochemical gradient over the inner membrane that drives transmembrane transport and the ATP synthase. Cytochrome c oxidase is the component of the respiratory chain that catalyzes the reduction of oxygen to water. Electrons originating from reduced cytochrome c in the intermembrane space (IMS) are transferred via the dinuclear copper A center (CU(A)) of subunit 2 and heme A of subunit 1 to the active site in subunit 1, a binuclear center (BNC) formed by heme A3 and copper B (CU(B)). The BNC reduces molecular oxygen to 2 water molecules using 4 electrons from cytochrome c in the IMS and 4 protons from the mitochondrial matrix. This is Cytochrome c oxidase subunit 2 (MT-CO2) from Sciurus carolinensis (Eastern gray squirrel).